The chain runs to 232 residues: Large ribosomal subunit protein uL1 (232 aa).

This sequence belongs to the universal ribosomal protein uL1 family. Part of the 50S ribosomal subunit.

In terms of biological role, binds directly to 23S rRNA. The L1 stalk is quite mobile in the ribosome, and is involved in E site tRNA release. Functionally, protein L1 is also a translational repressor protein, it controls the translation of the L11 operon by binding to its mRNA. In Xanthomonas oryzae pv. oryzae (strain MAFF 311018), this protein is Large ribosomal subunit protein uL1.